A 93-amino-acid polypeptide reads, in one-letter code: Bublin coiled-coil protein (93 aa).

2 disordered regions span residues 1–26 (MAGP…GDTF) and 74–93 (QQQS…QPPA). Residues 17–26 (DEGDEGGDTF) are compositionally biased toward acidic residues. Positions 59–80 (LKELLESNRQTRLEFQQQSKQL) form a coiled coil.

Belongs to the UPF0184 (EST00098) family.

The protein resides in the cell junction. It is found in the cytoplasm. Its subcellular location is the cytoskeleton. Essential for intermediate filament organization in intestinal cells, interacts with intermediate filament and regulates intestinal lumen morphology. The chain is Bublin coiled-coil protein (BBLN) from Taeniopygia guttata (Zebra finch).